The sequence spans 240 residues: MKMMDANEIIQFISNSQKTTPVKVYIKGDLEGIDFGANTKSFINGQTGVLFGEWSEIDAALKANEAKIKDVVVENDRRNSAIPLLDLKNIKARIEPGAIIRDQVEIGDNAVIMMGASINIGSVIGEGTMIDMNVVLGGRATVGKNCHIGAGSVLAGVIEPPSAKPVVVEDDVVIGANCVILEGVTVGKGAVVAAGAVVTEDVPPNTVVAGTPARVIKEIDEKTKGKTEIKQELRRLNEDN.

It belongs to the transferase hexapeptide repeat family. DapH subfamily.

The enzyme catalyses (S)-2,3,4,5-tetrahydrodipicolinate + acetyl-CoA + H2O = L-2-acetamido-6-oxoheptanedioate + CoA. It functions in the pathway amino-acid biosynthesis; L-lysine biosynthesis via DAP pathway; LL-2,6-diaminopimelate from (S)-tetrahydrodipicolinate (acetylase route): step 1/3. Its function is as follows. Catalyzes the transfer of an acetyl group from acetyl-CoA to tetrahydrodipicolinate. In Halalkalibacterium halodurans (strain ATCC BAA-125 / DSM 18197 / FERM 7344 / JCM 9153 / C-125) (Bacillus halodurans), this protein is 2,3,4,5-tetrahydropyridine-2,6-dicarboxylate N-acetyltransferase.